The following is a 273-amino-acid chain: MTAAETGRGKPRLGGGSGLGGSPAAVVWLHVGATGRDAVSPREPVVAAQAAGRPLKLPRRLLRQPTPGLRGAESGPTVDMPVPSSFNDIGQGWRLRHFVSWLWYEREVTLLERWIQDLCTRVVLRIGSAHFYAIVWVNGVDTVEHEGGYLPFEADISSLFQVEPLPSHLCITIAINNTLTPQPCHQGPSVHDRHLQVGTILPPLHAPTFPPHPVVFLPGTGYPKGYFVQNTDFDFFSYAGLLWSLLLYTTPPTYIDDVTVTTGVKRDSGEGFW.

Residues 1-20 are disordered; the sequence is MTAAETGRGKPRLGGGSGLG.

It belongs to the glycosyl hydrolase 2 family.

The chain is Putative inactive beta-glucuronidase protein GUSBP11 (GUSBP11) from Homo sapiens (Human).